The sequence spans 367 residues: Serine/threonine-protein kinase Sgk2 (367 aa).

The segment at 1-28 (MASSPVGVPSPQPSRANGNINLGPSANP) is disordered. A Phosphoserine modification is found at serine 10. The span at 15-28 (RANGNINLGPSANP) shows a compositional bias: polar residues. One can recognise a Protein kinase domain in the interval 35–292 (FDFLKVIGKG…FLDIKNHMFF (258 aa)). ATP is bound by residues 41 to 49 (IGKGNYGKV) and lysine 64. The Nuclear localization signal signature appears at 68–77 (KKSILKNKEQ). Residue aspartate 159 is the Proton acceptor of the active site. Threonine 193 is modified (phosphothreonine; by PDPK1). One can recognise an AGC-kinase C-terminal domain in the interval 293–367 (SPINWDDLYH…AQDDDDILDS (75 aa)). Residues serine 334 and serine 356 each carry the phosphoserine modification. Tyrosine 357 is subject to Phosphotyrosine.

Belongs to the protein kinase superfamily. AGC Ser/Thr protein kinase family. Activated by phosphorylation on Ser-356 by an unknown kinase (may be mTORC2 but not confirmed), transforming it into a substrate for PDPK1 which then phosphorylates it on Thr-193. Expressed in the proximal tubule and thick ascending limb of the loop of Henle (TALH).

The protein localises to the cytoplasm. The protein resides in the nucleus. The enzyme catalyses L-seryl-[protein] + ATP = O-phospho-L-seryl-[protein] + ADP + H(+). It catalyses the reaction L-threonyl-[protein] + ATP = O-phospho-L-threonyl-[protein] + ADP + H(+). Two specific sites, one in the kinase domain (Thr-193) and the other in the C-terminal regulatory region (Ser-356), need to be phosphorylated for its full activation. In terms of biological role, serine/threonine-protein kinase which is involved in the regulation of a wide variety of ion channels, membrane transporters, cell growth, survival and proliferation. Up-regulates Na(+) channels: SCNN1A/ENAC, K(+) channels: KCNA3/Kv1.3, KCNE1 and KCNQ1, amino acid transporter: SLC6A19, glutamate transporter: SLC1A6/EAAT4, glutamate receptors: GRIA1/GLUR1 and GRIK2/GLUR6, Na(+)/H(+) exchanger: SLC9A3/NHE3, and the Na(+)/K(+) ATPase. This Rattus norvegicus (Rat) protein is Serine/threonine-protein kinase Sgk2 (Sgk2).